The chain runs to 465 residues: Gamma-aminobutyric acid receptor subunit rho-2 (465 aa).

The first 20 residues, 1 to 20, serve as a signal peptide directing secretion; sequence MPYFSRLILFLFCLVVLVES. Residues 21-260 are Extracellular-facing; it reads RKPKKRRWTG…LYINFTLRRH (240 aa). A 4-aminobutanoate-binding site is contributed by Arg-105. Asn-120 is a glycosylation site (N-linked (GlcNAc...) asparagine). A 4-aminobutanoate-binding site is contributed by Ser-169. An intrachain disulfide couples Cys-178 to Cys-192. Glu-197 contributes to the 4-aminobutanoate binding site. The N-linked (GlcNAc...) asparagine glycan is linked to Asn-254. The helical transmembrane segment at 261–281 threads the bilayer; that stretch reads IFFFLLQTYFPATLMVMLSWV. Topologically, residues 282–293 are cytoplasmic; sequence SFWIDRRAVPAR. The helical transmembrane segment at 294–314 threads the bilayer; it reads VSLGITTVLTMSTIITGVNAS. The Extracellular segment spans residues 315–325; that stretch reads MPRVSYIKAVD. Residues 326 to 346 form a helical membrane-spanning segment; the sequence is IYLWVSFVFVFLSVLEYAAVN. The Cytoplasmic portion of the chain corresponds to 347–444; sequence YLTTVQERKE…FQNTHAIDKY (98 aa). The chain crosses the membrane as a helical span at residues 445–465; sequence SRLIFPASYIFFNLIYWSVFA.

The protein belongs to the ligand-gated ion channel (TC 1.A.9) family. Gamma-aminobutyric acid receptor (TC 1.A.9.5) subfamily. GABRR2 sub-subfamily. Three rho subunits (rho-1/GBRR1, rho-2/GBRR2 and rho-3/GBRR3) coassemble either to form functional homopentamers or heteropentamers. Rho-2 is unable to form a functional homopentamer. Interacts with SQSTM1.

The protein resides in the postsynaptic cell membrane. Its subcellular location is the cell membrane. It catalyses the reaction chloride(in) = chloride(out). Functionally, rho subunit of the pentameric ligand-gated chloride channels responsible for mediating the effects of gamma-aminobutyric acid (GABA), the major inhibitory neurotransmitter in the brain. Rho-containing GABA-gated chloride channels are a subclass of GABA(A) receptors (GABAARs) entirely composed of rho subunits, where GABA molecules bind at the rho intersubunit interfaces. When activated by GABA, rho-GABAARs selectively allow the flow of chloride anions across the cell membrane down their electrochemical gradient. Rho-2 GABAARs may contribute to the regulation of glial development in the cerebellum by controlling extrasynaptic transmission. Rho-2 GABAARs are also involved in neuronal tonic (extrasynaptic) and phasic (synaptic) transmission in the Purkinje neurons of the cerebellum. Rho-2 GABAARs expressed in retina may play a role in retinal neurotransmission. This Bos taurus (Bovine) protein is Gamma-aminobutyric acid receptor subunit rho-2 (GABRR2).